The chain runs to 547 residues: (E)-beta-caryophyllene synthase (547 aa).

2 residues coordinate Mg(2+): aspartate 302 and aspartate 306. Residues aspartate 302, aspartate 306, arginine 443, and asparagine 446 each coordinate substrate. The short motif at 302 to 306 (DDLYD) is the DDXXD motif element. 2 residues coordinate Mg(2+): asparagine 446 and glutamate 454.

Belongs to the terpene synthase family. Monomer. The cofactor is Mg(2+). It depends on Mn(2+) as a cofactor.

The protein localises to the cytoplasm. It carries out the reaction (2E,6E)-farnesyl diphosphate = (-)-(E)-beta-caryophyllene + diphosphate. The protein operates within secondary metabolite biosynthesis; terpenoid biosynthesis. Functionally, component of the volatile terpenes biosynthesis pathways. Sesquiterpene synthase that converts farnesyl diphosphate to (E)-beta-caryophyllene. Involved in indirect defense by producing volatile signals attracting natural enemies of herbivores. The chain is (E)-beta-caryophyllene synthase from Zea mays (Maize).